A 179-amino-acid polypeptide reads, in one-letter code: 3-hydroxyanthranilate 3,4-dioxygenase (179 aa).

Residue R47 participates in O2 binding. Fe cation-binding residues include H51, E57, and H96. E57 is a substrate binding site. Substrate contacts are provided by R100 and E110. C125, C128, C162, and C165 together coordinate Fe cation.

This sequence belongs to the 3-HAO family. Fe(2+) serves as cofactor.

The enzyme catalyses 3-hydroxyanthranilate + O2 = (2Z,4Z)-2-amino-3-carboxymuconate 6-semialdehyde. Its pathway is cofactor biosynthesis; NAD(+) biosynthesis; quinolinate from L-kynurenine: step 3/3. In terms of biological role, catalyzes the oxidative ring opening of 3-hydroxyanthranilate to 2-amino-3-carboxymuconate semialdehyde, which spontaneously cyclizes to quinolinate. The chain is 3-hydroxyanthranilate 3,4-dioxygenase from Bacillus cereus (strain 03BB102).